The chain runs to 1220 residues: MGDMANNSVAYGGVKNSLKEANHDGDFGITLADVRALMELRSTDALRKIQESYGDVYGICTRLKTSPVEGLSGNPADIERREAVFGKNFIPPKKPKTFLQLVWEALQDVTLIILEIAAIVSLGLSFYQPPEGDNALCGEVSVGEEEGEGETGWIEGAAILLSVVCVVLVTAFNDWSKEKQFRGLQSRIEQEQKFTVIRGGQVIQIPVADITVGDIAQVKYGDLLPADGILIQGNDLKIDESSLTGESDHVKKSLDKDPLLLSGTHVMEGSGRMVVTAVGINSQTGIIFTLLGAGGEEEEKKDEKKKEKKNKKQDGAIENRNKAKAQDGAAMEMQPLKSEEGGDGDEKDKKKANLPKKEKSVLQGKLTKLAVQIGKAGLLMSAITVIILVLYFVIDTFWVQKRPWLAECTPIYIQYFVKFFIIGVTVLVVAVPEGLPLAVTISLAYSVKKMMKDNNLVRHLDACETMGNATAICSDKTGTLTMNRMTVVQAYINEKHYKKIPEPEAIPPNILSYLVTGISVNCAYTSKILPPEKEGGLPRHVGNKTECALLGLLLDLKRDYQDVRNEIPEEALYKVYTFNSVRKSMSTVLKNSDGSYRIFSKGASEIILKKCFKILSANGEAKVFRPRDRDDIVKTVIEPMASEGLRTICLAFRDFPAGEPEPEWDNENDIVTGLTCIAVVGIEDPVRPEVPDAIKKCQRAGITVRMVTGDNINTARAIATKCGILHPGEDFLCLEGKDFNRRIRNEKGEIEQERIDKIWPKLRVLARSSPTDKHTLVKGIIDSTVSDQRQVVAVTGDGTNDGPALKKADVGFAMGIAGTDVAKEASDIILTDDNFTSIVKAVMWGRNVYDSISKFLQFQLTVNVVAVIVAFTGACITQDSPLKAVQMLWVNLIMDTLASLALATEPPTESLLLRKPYGRNKPLISRTMMKNILGHAFYQLVVVFTLLFAGEKFFDIDSGRNAPLHAPPSEHYTIVFNTFVLMQLFNEINARKIHGERNVFEGIFNNAIFCTIVLGTFVVQIIIVQFGGKPFSCSELSIEQWLWSIFLGMGTLLWGQLISTIPTSRLKFLKEAGHGTQKEEIPEEELAEDVEEIDHAERELRRGQILWFRGLNRIQTQIRVVNAFRSSLYEGLEKPESRSSIHNFMTHPEFRIEDSEPHIPLIDDTDAEDDAPTKRNCSPPPSPNKNNNAVDSGIYLTIEMNKSATSSSPGSPLHSLETSL.

The residue at position 2 (glycine 2) is an N-acetylglycine. Residues 2–105 (GDMANNSVAY…KTFLQLVWEA (104 aa)) lie on the Cytoplasmic side of the membrane. Serine 8 and serine 17 each carry phosphoserine. Residues 106-126 (LQDVTLIILEIAAIVSLGLSF) traverse the membrane as a helical segment. The Extracellular portion of the chain corresponds to 127-154 (YQPPEGDNALCGEVSVGEEEGEGETGWI). A helical membrane pass occupies residues 155-175 (EGAAILLSVVCVVLVTAFNDW). Residues 176–366 (SKEKQFRGLQ…KEKSVLQGKL (191 aa)) are Cytoplasmic-facing. Positions 297 to 356 (EEEKKDEKKKEKKNKKQDGAIENRNKAKAQDGAAMEMQPLKSEEGGDGDEKDKKKANLPK) are disordered. Composition is skewed to basic and acidic residues over residues 312–325 (KQDG…KAKA) and 337–356 (KSEE…NLPK). Serine 338 carries the post-translational modification Phosphoserine. A helical transmembrane segment spans residues 367-386 (TKLAVQIGKAGLLMSAITVI). Residues 387–418 (ILVLYFVIDTFWVQKRPWLAECTPIYIQYFVK) are Extracellular-facing. The helical transmembrane segment at 419–439 (FFIIGVTVLVVAVPEGLPLAV) threads the bilayer. The Cytoplasmic segment spans residues 440-855 (TISLAYSVKK…RNVYDSISKF (416 aa)). The active-site 4-aspartylphosphate intermediate is aspartate 475. Mg(2+) is bound by residues aspartate 475, threonine 477, aspartate 797, and aspartate 801. The helical transmembrane segment at 856-876 (LQFQLTVNVVAVIVAFTGACI) threads the bilayer. Over 877–882 (TQDSPL) the chain is Extracellular. Residues 883-903 (KAVQMLWVNLIMDTLASLALA) form a helical membrane-spanning segment. Residues 904–927 (TEPPTESLLLRKPYGRNKPLISRT) lie on the Cytoplasmic side of the membrane. The chain crosses the membrane as a helical span at residues 928–948 (MMKNILGHAFYQLVVVFTLLF). The Extracellular segment spans residues 949–971 (AGEKFFDIDSGRNAPLHAPPSEH). Residues 972–991 (YTIVFNTFVLMQLFNEINAR) form a helical membrane-spanning segment. At 992-1005 (KIHGERNVFEGIFN) the chain is on the cytoplasmic side. A helical membrane pass occupies residues 1006–1027 (NAIFCTIVLGTFVVQIIIVQFG). The Extracellular segment spans residues 1028 to 1039 (GKPFSCSELSIE). A helical transmembrane segment spans residues 1040 to 1060 (QWLWSIFLGMGTLLWGQLIST). Residues 1061-1220 (IPTSRLKFLK…SPLHSLETSL (160 aa)) lie on the Cytoplasmic side of the membrane. The segment at 1100-1117 (LRRGQILWFRGLNRIQTQ) is calmodulin-binding subdomain A. Threonine 1116 is subject to Phosphothreonine; by PKC. Residues 1118 to 1127 (IRVVNAFRSS) form a calmodulin-binding subdomain B region. The tract at residues 1118 to 1220 (IRVVNAFRSS…SPLHSLETSL (103 aa)) is required for basolateral membrane targeting. Phosphoserine is present on residues serine 1140 and serine 1155. The segment at 1160 to 1220 (PLIDDTDAED…SPLHSLETSL (61 aa)) is disordered. A Phosphothreonine modification is found at threonine 1165. Phosphoserine is present on residues serine 1178 and serine 1182. Residues 1200 to 1220 (MNKSATSSSPGSPLHSLETSL) show a composition bias toward polar residues.

This sequence belongs to the cation transport ATPase (P-type) (TC 3.A.3) family. Type IIB subfamily. In terms of assembly, monomer. Dimer. Oligomer. Calmodulin binding. Interacts with PDZD11. Interacts with SLC35G1 and STIM1. Interacts with YWHAE; interacts with the monomeric and dimeric forms of the YWHAE but prefer the monomer form; this interaction inhibits calcium-transporting ATPase activity. Interacts with NPTN; this interaction stabilizes ATP2B1 and increases ATPase activity; this interaction controls T cell calcium homeostasis following T cell activation. Interacts with EPB41; regulates small intestinal calcium absorption through regulation of membrane expression of ATP2B1.

Its subcellular location is the cell membrane. It is found in the basolateral cell membrane. The protein localises to the synapse. It localises to the presynaptic cell membrane. The protein resides in the cytoplasmic vesicle. Its subcellular location is the secretory vesicle. It is found in the synaptic vesicle membrane. The catalysed reaction is Ca(2+)(in) + ATP + H2O = Ca(2+)(out) + ADP + phosphate + H(+). Catalyzes the hydrolysis of ATP coupled with the transport of calcium from the cytoplasm to the extracellular space thereby maintaining intracellular calcium homeostasis. Plays a role in blood pressure regulation through regulation of intracellular calcium concentration and nitric oxide production leading to regulation of vascular smooth muscle cells vasoconstriction. Positively regulates bone mineralization through absorption of calcium from the intestine. Plays dual roles in osteoclast differentiation and survival by regulating RANKL-induced calcium oscillations in preosteoclasts and mediating calcium extrusion in mature osteoclasts. Regulates insulin sensitivity through calcium/calmodulin signaling pathway by regulating AKT1 activation and NOS3 activation in endothelial cells. May play a role in synaptic transmission by modulating calcium and proton dynamics at the synaptic vesicles. The sequence is that of Plasma membrane calcium-transporting ATPase 1 from Sus scrofa (Pig).